A 156-amino-acid polypeptide reads, in one-letter code: Ribosomal RNA large subunit methyltransferase H (156 aa).

Residues leucine 73, glycine 104, and 123–128 (LSPLTL) contribute to the S-adenosyl-L-methionine site.

This sequence belongs to the RNA methyltransferase RlmH family. In terms of assembly, homodimer.

It localises to the cytoplasm. The catalysed reaction is pseudouridine(1915) in 23S rRNA + S-adenosyl-L-methionine = N(3)-methylpseudouridine(1915) in 23S rRNA + S-adenosyl-L-homocysteine + H(+). In terms of biological role, specifically methylates the pseudouridine at position 1915 (m3Psi1915) in 23S rRNA. The sequence is that of Ribosomal RNA large subunit methyltransferase H from Serratia proteamaculans (strain 568).